Consider the following 405-residue polypeptide: Phosphoglycerate kinase (405 aa).

Substrate is bound by residues 24-26 (DFN), Arg-40, 63-66 (HLGR), Arg-122, and Arg-162. ATP-binding positions include Lys-212, Glu-331, and 361 to 364 (GGDS).

The protein belongs to the phosphoglycerate kinase family. As to quaternary structure, monomer.

Its subcellular location is the cytoplasm. It carries out the reaction (2R)-3-phosphoglycerate + ATP = (2R)-3-phospho-glyceroyl phosphate + ADP. It participates in carbohydrate degradation; glycolysis; pyruvate from D-glyceraldehyde 3-phosphate: step 2/5. This is Phosphoglycerate kinase from Corynebacterium aurimucosum (strain ATCC 700975 / DSM 44827 / CIP 107346 / CN-1) (Corynebacterium nigricans).